A 461-amino-acid chain; its full sequence is Glutamate--tRNA ligase (461 aa).

Residues 8–18 (PSPTGYLHIGG) carry the 'HIGH' region motif. The 'KMSKS' region motif lies at 240–244 (KMSKR). Residue Lys-243 participates in ATP binding.

The protein belongs to the class-I aminoacyl-tRNA synthetase family. Glutamate--tRNA ligase type 1 subfamily. In terms of assembly, monomer.

It localises to the cytoplasm. It carries out the reaction tRNA(Glu) + L-glutamate + ATP = L-glutamyl-tRNA(Glu) + AMP + diphosphate. Catalyzes the attachment of glutamate to tRNA(Glu) in a two-step reaction: glutamate is first activated by ATP to form Glu-AMP and then transferred to the acceptor end of tRNA(Glu). The chain is Glutamate--tRNA ligase from Chromobacterium violaceum (strain ATCC 12472 / DSM 30191 / JCM 1249 / CCUG 213 / NBRC 12614 / NCIMB 9131 / NCTC 9757 / MK).